We begin with the raw amino-acid sequence, 555 residues long: Oligo-1,6-glucosidase (555 aa).

Aspartate 199 functions as the Nucleophile in the catalytic mechanism. Glutamate 255 (proton donor) is an active-site residue.

Belongs to the glycosyl hydrolase 13 family.

It is found in the cytoplasm. The catalysed reaction is Hydrolysis of (1-&gt;6)-alpha-D-glucosidic linkages in some oligosaccharides produced from starch and glycogen by alpha-amylase, and in isomaltose.. The polypeptide is Oligo-1,6-glucosidase (malL) (Heyndrickxia coagulans (Weizmannia coagulans)).